The primary structure comprises 211 residues: Thymidylate kinase (211 aa).

10–17 contacts ATP; the sequence is GLDGSGKT.

This sequence belongs to the thymidylate kinase family.

It catalyses the reaction dTMP + ATP = dTDP + ADP. In terms of biological role, phosphorylation of dTMP to form dTDP in both de novo and salvage pathways of dTTP synthesis. In Blochmanniella floridana, this protein is Thymidylate kinase.